We begin with the raw amino-acid sequence, 248 residues long: HTH-type transcriptional regulator GgaR (248 aa).

One can recognise an HTH gntR-type domain in the interval 22–90 (TPLYIKFAET…RGYGTQINNI (69 aa)). The segment at residues 50–69 (ERDLSQLTGVSRITVRKAMQ) is a DNA-binding region (H-T-H motif).

Senses ADP-glucose (ADPG), which is the substrate for glycogen elongation, as an effector. In the presence of ADPG, GgaR becomes inactive and derepresses the yegTUV operon, leading to glycogen accumulation. In contrast, in the absence of glucose, the concentration of ADPG decreases, GgaR becomes active, and glycogen accumulation is repressed. Transcriptional regulator that regulates glycogen accumulation in response to the amount of glucose available to the cell. Acts as a repressor of the yegTUV operon, which may be involved in glycogen accumulation. The sequence is that of HTH-type transcriptional regulator GgaR from Escherichia coli O6:H1 (strain CFT073 / ATCC 700928 / UPEC).